We begin with the raw amino-acid sequence, 382 residues long: Innexin-8 (382 aa).

A run of 4 helical transmembrane segments spans residues 29-49 (LITA…TYVG), 103-123 (QWSS…KFLW), 187-207 (VIKI…AIFL), and 270-290 (IFLF…IAHF).

Belongs to the pannexin family.

The protein resides in the cell membrane. It localises to the cell junction. Its subcellular location is the gap junction. In terms of biological role, structural component of the gap junctions. The sequence is that of Innexin-8 (inx-8) from Caenorhabditis elegans.